The sequence spans 300 residues: FeMo cofactor biosynthesis protein NifB (300 aa).

The Radical SAM core domain maps to histidine 24 to arginine 266. Residues cysteine 38, cysteine 42, and cysteine 45 each contribute to the [4Fe-4S] cluster site. Glycine 93, threonine 144, and isoleucine 196 together coordinate S-adenosyl-L-methionine. Residues cysteine 262 and cysteine 265 each contribute to the [4Fe-4S] cluster site.

Belongs to the radical SAM superfamily. NifB family. Monomer. The cofactor is [4Fe-4S] cluster.

It functions in the pathway cofactor biosynthesis; Fe-Mo cofactor biosynthesis. Involved in the biosynthesis of the iron-molybdenum cofactor (FeMo-co or M-cluster) found in the dinitrogenase enzyme of the nitrogenase complex in nitrogen-fixing microorganisms. NifB catalyzes the crucial step of radical SAM-dependent carbide insertion that occurs concomitant with the insertion of a 9th sulfur and the rearrangement/coupling of two [4Fe-4S] clusters into a [8Fe-9S-C] cluster, the precursor to the M-cluster. The polypeptide is FeMo cofactor biosynthesis protein NifB (Methanocaldococcus jannaschii (strain ATCC 43067 / DSM 2661 / JAL-1 / JCM 10045 / NBRC 100440) (Methanococcus jannaschii)).